Here is a 264-residue protein sequence, read N- to C-terminus: Chymotrypsin-like protease CTRL-1 (264 aa).

The first 18 residues, methionine 1–glycine 18, serve as a signal peptide directing secretion. Residues cysteine 19–arginine 33 constitute a propeptide, activation peptide. 5 disulfide bridges follow: cysteine 19–cysteine 141, cysteine 60–cysteine 76, cysteine 155–cysteine 220, cysteine 187–cysteine 201, and cysteine 210–cysteine 239. The region spanning isoleucine 34–alanine 262 is the Peptidase S1 domain. Histidine 75 functions as the Charge relay system in the catalytic mechanism. An N-linked (GlcNAc...) asparagine glycan is attached at asparagine 114. Aspartate 121 acts as the Charge relay system in catalysis. The Charge relay system role is filled by serine 214.

It belongs to the peptidase S1 family.

The sequence is that of Chymotrypsin-like protease CTRL-1 (CTRL) from Homo sapiens (Human).